We begin with the raw amino-acid sequence, 197 residues long: Transcription factor FapR (197 aa).

The protein belongs to the FapR family.

Functionally, transcriptional factor involved in regulation of membrane lipid biosynthesis by repressing genes involved in fatty acid and phospholipid metabolism. This chain is Transcription factor FapR, found in Bacillus anthracis (strain A0248).